The following is a 542-amino-acid chain: GMP synthase [glutamine-hydrolyzing] (542 aa).

The region spanning 28–218 (MLVILDFGSQ…VYHICQCEPT (191 aa)) is the Glutamine amidotransferase type-1 domain. The Nucleophile role is filled by Cys-105. Residues His-192 and Glu-194 contribute to the active site. Residues 219–417 (WTTEAFVEES…IGLPEEIVRR (199 aa)) enclose the GMPS ATP-PPase domain. ATP is bound at residue 246 to 252 (SGGVDSS).

Homodimer.

It carries out the reaction XMP + L-glutamine + ATP + H2O = GMP + L-glutamate + AMP + diphosphate + 2 H(+). It functions in the pathway purine metabolism; GMP biosynthesis; GMP from XMP (L-Gln route): step 1/1. Functionally, catalyzes the synthesis of GMP from XMP. The protein is GMP synthase [glutamine-hydrolyzing] of Rippkaea orientalis (strain PCC 8801 / RF-1) (Cyanothece sp. (strain PCC 8801)).